A 417-amino-acid chain; its full sequence is 4-hydroxy-3-methylbut-2-en-1-yl diphosphate synthase (flavodoxin) (417 aa).

[4Fe-4S] cluster is bound by residues Cys304, Cys307, Cys350, and Glu357.

It belongs to the IspG family. It depends on [4Fe-4S] cluster as a cofactor.

The catalysed reaction is (2E)-4-hydroxy-3-methylbut-2-enyl diphosphate + oxidized [flavodoxin] + H2O + 2 H(+) = 2-C-methyl-D-erythritol 2,4-cyclic diphosphate + reduced [flavodoxin]. It participates in isoprenoid biosynthesis; isopentenyl diphosphate biosynthesis via DXP pathway; isopentenyl diphosphate from 1-deoxy-D-xylulose 5-phosphate: step 5/6. Its function is as follows. Converts 2C-methyl-D-erythritol 2,4-cyclodiphosphate (ME-2,4cPP) into 1-hydroxy-2-methyl-2-(E)-butenyl 4-diphosphate. This is 4-hydroxy-3-methylbut-2-en-1-yl diphosphate synthase (flavodoxin) from Rhizobium rhizogenes (strain K84 / ATCC BAA-868) (Agrobacterium radiobacter).